The chain runs to 176 residues: NADH-quinone oxidoreductase subunit I 2 (176 aa).

2 4Fe-4S ferredoxin-type domains span residues Ile45 to Ala77 and Arg87 to Asp116. Positions 57, 60, 63, 67, 96, 99, 102, and 106 each coordinate [4Fe-4S] cluster.

This sequence belongs to the complex I 23 kDa subunit family. NDH-1 is composed of 14 different subunits. Subunits NuoA, H, J, K, L, M, N constitute the membrane sector of the complex. It depends on [4Fe-4S] cluster as a cofactor.

The protein localises to the cell inner membrane. It carries out the reaction a quinone + NADH + 5 H(+)(in) = a quinol + NAD(+) + 4 H(+)(out). Functionally, NDH-1 shuttles electrons from NADH, via FMN and iron-sulfur (Fe-S) centers, to quinones in the respiratory chain. The immediate electron acceptor for the enzyme in this species is believed to be ubiquinone. Couples the redox reaction to proton translocation (for every two electrons transferred, four hydrogen ions are translocated across the cytoplasmic membrane), and thus conserves the redox energy in a proton gradient. The protein is NADH-quinone oxidoreductase subunit I 2 of Geobacter sulfurreducens (strain ATCC 51573 / DSM 12127 / PCA).